We begin with the raw amino-acid sequence, 554 residues long: Hydroxylamine reductase (554 aa).

C3, C6, C18, and C25 together coordinate [2Fe-2S] cluster. The hybrid [4Fe-2O-2S] cluster site is built by H252, E276, C320, C408, C436, C461, E495, and K497. C408 bears the Cysteine persulfide mark.

Belongs to the HCP family. [2Fe-2S] cluster is required as a cofactor. The cofactor is hybrid [4Fe-2O-2S] cluster.

It localises to the cytoplasm. It catalyses the reaction A + NH4(+) + H2O = hydroxylamine + AH2 + H(+). Its function is as follows. Catalyzes the reduction of hydroxylamine to form NH(3) and H(2)O. The sequence is that of Hydroxylamine reductase from Shewanella pealeana (strain ATCC 700345 / ANG-SQ1).